The sequence spans 334 residues: Holliday junction branch migration complex subunit RuvB (334 aa).

The large ATPase domain (RuvB-L) stretch occupies residues 4–186 (ADRLIAPENP…FGITQRLEYY (183 aa)). ATP-binding positions include isoleucine 25, arginine 26, glycine 67, lysine 70, threonine 71, threonine 72, 133–135 (EDY), arginine 176, tyrosine 186, and arginine 223. Residue threonine 71 participates in Mg(2+) binding. A small ATPAse domain (RuvB-S) region spans residues 187 to 257 (KIPDLQNIVQ…TADKALNMLD (71 aa)). The segment at 260 to 334 (SKGFDYMDRK…RAYLHFGIEK (75 aa)) is head domain (RuvB-H). Residues arginine 315 and arginine 320 each contribute to the DNA site.

This sequence belongs to the RuvB family. In terms of assembly, homohexamer. Forms an RuvA(8)-RuvB(12)-Holliday junction (HJ) complex. HJ DNA is sandwiched between 2 RuvA tetramers; dsDNA enters through RuvA and exits via RuvB. An RuvB hexamer assembles on each DNA strand where it exits the tetramer. Each RuvB hexamer is contacted by two RuvA subunits (via domain III) on 2 adjacent RuvB subunits; this complex drives branch migration. In the full resolvosome a probable DNA-RuvA(4)-RuvB(12)-RuvC(2) complex forms which resolves the HJ.

The protein resides in the cytoplasm. The catalysed reaction is ATP + H2O = ADP + phosphate + H(+). The RuvA-RuvB-RuvC complex processes Holliday junction (HJ) DNA during genetic recombination and DNA repair, while the RuvA-RuvB complex plays an important role in the rescue of blocked DNA replication forks via replication fork reversal (RFR). RuvA specifically binds to HJ cruciform DNA, conferring on it an open structure. The RuvB hexamer acts as an ATP-dependent pump, pulling dsDNA into and through the RuvAB complex. RuvB forms 2 homohexamers on either side of HJ DNA bound by 1 or 2 RuvA tetramers; 4 subunits per hexamer contact DNA at a time. Coordinated motions by a converter formed by DNA-disengaged RuvB subunits stimulates ATP hydrolysis and nucleotide exchange. Immobilization of the converter enables RuvB to convert the ATP-contained energy into a lever motion, pulling 2 nucleotides of DNA out of the RuvA tetramer per ATP hydrolyzed, thus driving DNA branch migration. The RuvB motors rotate together with the DNA substrate, which together with the progressing nucleotide cycle form the mechanistic basis for DNA recombination by continuous HJ branch migration. Branch migration allows RuvC to scan DNA until it finds its consensus sequence, where it cleaves and resolves cruciform DNA. This Vibrio vulnificus (strain YJ016) protein is Holliday junction branch migration complex subunit RuvB.